Reading from the N-terminus, the 242-residue chain is Type III pantothenate kinase (242 aa).

An ATP-binding site is contributed by 7-14 (DLGNSRFK). Substrate is bound by residues Y91 and 98–101 (GVDR). The active-site Proton acceptor is the D100. T121 is a binding site for ATP. Position 171 (T171) interacts with substrate.

It belongs to the type III pantothenate kinase family. Homodimer. NH4(+) is required as a cofactor. The cofactor is K(+).

It localises to the cytoplasm. The enzyme catalyses (R)-pantothenate + ATP = (R)-4'-phosphopantothenate + ADP + H(+). Its pathway is cofactor biosynthesis; coenzyme A biosynthesis; CoA from (R)-pantothenate: step 1/5. Functionally, catalyzes the phosphorylation of pantothenate (Pan), the first step in CoA biosynthesis. This chain is Type III pantothenate kinase, found in Xylella fastidiosa (strain M23).